Consider the following 1213-residue polypeptide: DNA-directed RNA polymerase subunit beta' (1213 aa).

Positions 60, 62, 75, and 78 each coordinate Zn(2+). Positions 450, 452, and 454 each coordinate Mg(2+). Zn(2+) contacts are provided by cysteine 819, cysteine 893, cysteine 900, and cysteine 903.

It belongs to the RNA polymerase beta' chain family. The RNAP catalytic core consists of 2 alpha, 1 beta, 1 beta' and 1 omega subunit. When a sigma factor is associated with the core the holoenzyme is formed, which can initiate transcription. The cofactor is Mg(2+). It depends on Zn(2+) as a cofactor.

It catalyses the reaction RNA(n) + a ribonucleoside 5'-triphosphate = RNA(n+1) + diphosphate. DNA-dependent RNA polymerase catalyzes the transcription of DNA into RNA using the four ribonucleoside triphosphates as substrates. The sequence is that of DNA-directed RNA polymerase subunit beta' from Streptococcus pyogenes serotype M1.